The chain runs to 145 residues: Hemoglobin subunit beta-1 (145 aa).

The Globin domain occupies 1–145; that stretch reads TFTNDESQHI…VEAALATGYH (145 aa). Heme b-binding residues include histidine 62 and histidine 91.

This sequence belongs to the globin family. Major hemoglobin is a tetramer of two alpha-1 chains and two beta-1 chains. As to expression, red blood cells.

Involved in oxygen transport from the lung to the various peripheral tissues. This Triturus cristatus (Great crested newt) protein is Hemoglobin subunit beta-1 (HBB1).